The sequence spans 1109 residues: Cation channel sperm-associated auxiliary subunit beta (1109 aa).

Residues 1–1055 (MESPLIYVML…QIYVDEVPLP (1055 aa)) lie on the Extracellular side of the membrane. An intrachain disulfide couples Cys-35 to Cys-60. Residues Asn-66, Asn-90, and Asn-118 are each glycosylated (N-linked (GlcNAc...) asparagine). Cys-189 and Cys-302 are oxidised to a cystine. Residue Asn-321 is glycosylated (N-linked (GlcNAc...) asparagine). The cysteines at positions 330 and 343 are disulfide-linked. Asn-672 is a glycosylation site (N-linked (GlcNAc...) asparagine). 4 cysteine pairs are disulfide-bonded: Cys-720–Cys-818, Cys-831–Cys-1039, Cys-913–Cys-922, and Cys-924–Cys-939. N-linked (GlcNAc...) asparagine glycans are attached at residues Asn-915 and Asn-923. An N-linked (GlcNAc...) asparagine glycan is attached at Asn-1017. Residues 1056–1078 (FPGHALIAVATSVVLGVLIFIAF) form a helical membrane-spanning segment. Topologically, residues 1079-1109 (VFQLRNIHPLKALKKSIRGNPGLTSSTTVSS) are cytoplasmic.

Component of the CatSper complex or CatSpermasome composed of the core pore-forming members CATSPER1, CATSPER2, CATSPER3 and CATSPER4 as well as auxiliary members CATSPERB, CATSPERG2, CATSPERD, CATSPERE, CATSPERZ, C2CD6/CATSPERT, SLCO6C1, TMEM249, TMEM262 and EFCAB9. HSPA1 may be an additional auxiliary complex member. The core complex members CATSPER1, CATSPER2, CATSPER3 and CATSPER4 form a heterotetrameric channel. The auxiliary CATSPERB, CATSPERG2, CATSPERD and CATSPERE subunits form a pavilion-like structure over the pore which stabilizes the complex through interactions with CATSPER4, CATSPER3, CATSPER1 and CATSPER2 respectively. SLCO6C1 interacts with CATSPERE and TMEM262/CATSPERH interacts with CATSPERB, further stabilizing the complex. C2CD6/CATSPERT interacts at least with CATSPERD and is required for targeting the CatSper complex in the flagellar membrane. Testis-specific. Specifically present in the principal piece of sperm tail (at protein level). Specifically expressed in the seminiferous tubules but not in the interstitial cells. Within the tubules, it is expressed in spermatocytes and spermatids, but not in spermatogonia.

The protein localises to the cell projection. The protein resides in the cilium. It is found in the flagellum membrane. Auxiliary component of the CatSper complex, a complex involved in sperm cell hyperactivation. Sperm cell hyperactivation is needed for sperm motility which is essential late in the preparation of sperm for fertilization. The chain is Cation channel sperm-associated auxiliary subunit beta from Mus musculus (Mouse).